The chain runs to 182 residues: NADH-quinone oxidoreductase subunit C 2 (182 aa).

A disordered region spans residues 153-182 (YKDKLNPFGAEGPPPTQPDLATNDIPQGGR).

It belongs to the complex I 30 kDa subunit family. As to quaternary structure, NDH-1 is composed of 14 different subunits. Subunits NuoB, C, D, E, F, and G constitute the peripheral sector of the complex.

The protein resides in the cell inner membrane. The catalysed reaction is a quinone + NADH + 5 H(+)(in) = a quinol + NAD(+) + 4 H(+)(out). In terms of biological role, NDH-1 shuttles electrons from NADH, via FMN and iron-sulfur (Fe-S) centers, to quinones in the respiratory chain. The immediate electron acceptor for the enzyme in this species is believed to be ubiquinone. Couples the redox reaction to proton translocation (for every two electrons transferred, four hydrogen ions are translocated across the cytoplasmic membrane), and thus conserves the redox energy in a proton gradient. This chain is NADH-quinone oxidoreductase subunit C 2, found in Rhizobium meliloti (strain 1021) (Ensifer meliloti).